The sequence spans 472 residues: Levansucrase (472 aa).

The N-terminal stretch at 1–29 is a signal peptide; it reads MNIKKIVKQATVLTFTTALLAGGATQAFA. Sucrose contacts are provided by Trp85, Asp86, and Ser164. The Nucleophile role is filled by Asp86. Asp241 contacts Ca(2+). Residues Arg246 and Asp247 each contribute to the sucrose site. Ca(2+) contacts are provided by Gln272, Leu308, Asn310, and Asp339. A sucrose-binding site is contributed by Glu340. Glu342 functions as the Proton donor/acceptor in the catalytic mechanism. Arg360 is a binding site for sucrose.

It belongs to the glycosyl hydrolase 68 family.

It is found in the secreted. It carries out the reaction [6)-beta-D-fructofuranosyl-(2-&gt;](n) alpha-D-glucopyranoside + sucrose = [6)-beta-D-fructofuranosyl-(2-&gt;](n+1) alpha-D-glucopyranoside + D-glucose. With respect to regulation, ca(2+) may play an important structural role and promote stability of levansucrase. Its function is as follows. Catalyzes the synthesis of levan, a fructose polymer, by transferring the fructosyl moiety from sucrose to a growing acceptor molecule. Also displays sucrose hydrolase activity. The polypeptide is Levansucrase (Bacillus amyloliquefaciens (Bacillus velezensis)).